The sequence spans 186 residues: Elongation factor P (186 aa).

The protein belongs to the elongation factor P family.

The protein resides in the cytoplasm. The protein operates within protein biosynthesis; polypeptide chain elongation. Its function is as follows. Involved in peptide bond synthesis. Stimulates efficient translation and peptide-bond synthesis on native or reconstituted 70S ribosomes in vitro. Probably functions indirectly by altering the affinity of the ribosome for aminoacyl-tRNA, thus increasing their reactivity as acceptors for peptidyl transferase. This is Elongation factor P from Neisseria meningitidis serogroup A / serotype 4A (strain DSM 15465 / Z2491).